A 153-amino-acid chain; its full sequence is Riboflavin synthase (153 aa).

Belongs to the DMRL synthase family. In terms of assembly, homooligomer. Mg(2+) serves as cofactor.

It catalyses the reaction 2 6,7-dimethyl-8-(1-D-ribityl)lumazine + H(+) = 5-amino-6-(D-ribitylamino)uracil + riboflavin. The protein operates within cofactor biosynthesis; riboflavin biosynthesis; riboflavin from 2-hydroxy-3-oxobutyl phosphate and 5-amino-6-(D-ribitylamino)uracil: step 2/2. With respect to regulation, inhibited by EDTA. Its function is as follows. The relatively low activity of this enzyme suggested that 6,7-dimethyl-8-ribityllumazine might not be its natural substrate. The chain is Riboflavin synthase (ribC) from Methanothermobacter marburgensis (strain ATCC BAA-927 / DSM 2133 / JCM 14651 / NBRC 100331 / OCM 82 / Marburg) (Methanobacterium thermoautotrophicum).